The chain runs to 168 residues: Large ribosomal subunit protein uL29c (168 aa).

The tract at residues 1–20 (MLAIHSLSSTPCSSGLTSPP) is disordered. Residues 1–58 (MLAIHSLSSTPCSSGLTSPPKSTLLTKSSFHGLRLPSVNLSSSLRLRVQTPPSSVVVM) constitute a chloroplast transit peptide.

As to quaternary structure, component of the chloroplast large ribosomal subunit (LSU). Mature 70S chloroplast ribosomes of higher plants consist of a small (30S) and a large (50S) subunit. The 30S small subunit contains 1 molecule of ribosomal RNA (16S rRNA) and 24 different proteins. The 50S large subunit contains 3 rRNA molecules (23S, 5S and 4.5S rRNA) and 33 different proteins.

The protein localises to the plastid. Its subcellular location is the chloroplast. Functionally, component of the chloroplast ribosome (chloro-ribosome), a dedicated translation machinery responsible for the synthesis of chloroplast genome-encoded proteins, including proteins of the transcription and translation machinery and components of the photosynthetic apparatus. In Spinacia oleracea (Spinach), this protein is Large ribosomal subunit protein uL29c (RPL29).